An 838-amino-acid chain; its full sequence is Envelope glycoprotein H (838 aa).

Positions 1-18 (MGNGLWFVGVIILGVAWG) are cleaved as a signal peptide. Topologically, residues 19–803 (QVHDWTEQTD…DTQPVAAIAP (785 aa)) are virion surface. N-linked (GlcNAc...) asparagine; by host glycosylation is found at asparagine 73 and asparagine 120. Residues 174–204 (FPRGDNVATASHPSGPRDTPPPRPPVGARRH) form a disordered region. Asparagine 216 carries N-linked (GlcNAc...) asparagine; by host glycosylation. Residues 259 to 323 (DAALVRARYG…PGGPRYRVFV (65 aa)) are interaction with gL. Asparagine 332, asparagine 437, asparagine 670, and asparagine 784 each carry an N-linked (GlcNAc...) asparagine; by host glycan. The helical transmembrane segment at 804-824 (GFLAASALGVVMITAALAGIL) threads the bilayer. At 825–838 (KVLRTSVPFFWRRE) the chain is on the intravirion side.

This sequence belongs to the herpesviridae glycoprotein H family. In terms of assembly, interacts with glycoprotein L (gL); this interaction is necessary for the correct processing and cell surface expression of gH. The heterodimer gH/gL seems to interact with gB trimers during fusion. Associates with the gB-gH/gL-gD complex. Interacts with VP16. Post-translationally, N-glycosylated, O-glycosylated, and sialylated.

Its subcellular location is the virion membrane. The protein resides in the host cell membrane. It is found in the host endosome membrane. In terms of biological role, the heterodimer glycoprotein H-glycoprotein L is required for the fusion of viral and plasma membranes leading to virus entry into the host cell. Following initial binding to host receptor, membrane fusion is mediated by the fusion machinery composed of gB and the heterodimer gH/gL. May also be involved in the fusion between the virion envelope and the outer nuclear membrane during virion morphogenesis. This Human herpesvirus 1 (strain 17) (HHV-1) protein is Envelope glycoprotein H.